Consider the following 128-residue polypeptide: Small ribosomal subunit protein uS12 (128 aa).

Residue D89 is modified to 3-methylthioaspartic acid.

Belongs to the universal ribosomal protein uS12 family. In terms of assembly, part of the 30S ribosomal subunit. Contacts proteins S8 and S17. May interact with IF1 in the 30S initiation complex.

In terms of biological role, with S4 and S5 plays an important role in translational accuracy. Functionally, interacts with and stabilizes bases of the 16S rRNA that are involved in tRNA selection in the A site and with the mRNA backbone. Located at the interface of the 30S and 50S subunits, it traverses the body of the 30S subunit contacting proteins on the other side and probably holding the rRNA structure together. The combined cluster of proteins S8, S12 and S17 appears to hold together the shoulder and platform of the 30S subunit. The polypeptide is Small ribosomal subunit protein uS12 (Campylobacter jejuni subsp. jejuni serotype O:6 (strain 81116 / NCTC 11828)).